Here is a 322-residue protein sequence, read N- to C-terminus: Arginase (322 aa).

The Mn(2+) site is built by His113, Asp141, His143, and Asp145. Substrate is bound by residues 143-147 (HADIN), 154-156 (SGN), and Asp200. Positions 247 and 249 each coordinate Mn(2+). The substrate site is built by Thr261 and Glu292.

This sequence belongs to the arginase family. In terms of assembly, homotrimer. The cofactor is Mn(2+).

It catalyses the reaction L-arginine + H2O = urea + L-ornithine. Its pathway is nitrogen metabolism; urea cycle; L-ornithine and urea from L-arginine: step 1/1. This is Arginase (ARG) from Coccidioides immitis (strain RS) (Valley fever fungus).